The sequence spans 1856 residues: Autophagy-related protein 2 (1856 aa).

Disordered regions lie at residues 123 to 167 (NTND…TGNK), 229 to 283 (LRTL…GNES), 309 to 328 (KSAASGIPGEVDNKATDKED), 395 to 428 (TKSRSAQRNEKFPQYTNDNDEIPEDQSESDDASH), 1157 to 1177 (LNGTENGSTSESSSQEASSLM), 1614 to 1647 (MLGGEGSSVRSPNLGGSDNRRNSNASDELPVEVA), and 1719 to 1741 (KLQPHTKGNHEGLTEEEEDEDED). Residues 137–147 (ASEDDDEDDID) are compositionally biased toward acidic residues. The span at 250–262 (KKQQGSDNDSPTD) shows a compositional bias: polar residues. Acidic residues predominate over residues 270–280 (NDNDDDDDDYG). Residues 412–424 (DNDEIPEDQSESD) show a composition bias toward acidic residues. Residues 1157–1170 (LNGTENGSTSESSS) are compositionally biased toward low complexity. Positions 1621–1639 (SVRSPNLGGSDNRRNSNAS) are enriched in polar residues. Acidic residues predominate over residues 1732-1741 (TEEEEDEDED).

The protein belongs to the ATG2 family.

Its subcellular location is the preautophagosomal structure membrane. It is found in the endoplasmic reticulum membrane. The catalysed reaction is a 1,2-diacyl-sn-glycero-3-phosphocholine(in) = a 1,2-diacyl-sn-glycero-3-phosphocholine(out). It carries out the reaction a 1,2-diacyl-sn-glycero-3-phospho-L-serine(in) = a 1,2-diacyl-sn-glycero-3-phospho-L-serine(out). The enzyme catalyses a 1,2-diacyl-sn-glycero-3-phosphoethanolamine(in) = a 1,2-diacyl-sn-glycero-3-phosphoethanolamine(out). In terms of biological role, lipid transfer protein required for autophagosome completion and peroxisome degradation. Tethers the edge of the isolation membrane (IM) to the endoplasmic reticulum (ER) and mediates direct lipid transfer from ER to IM for IM expansion. ATG2/SPO72 binds to the ER exit site (ERES), which is the membrane source for autophagosome formation, using basic residues in its N-terminal region (NR) and to the expanding edge of the IM through its C-terminal region. The latter binding is assisted by an ATG18-PtdIns3P interaction. ATG2/SPO72 then extracts phospholipids from the membrane source using its NR and transfers them to ATG9 to the IM through its predicted beta-sheet-rich structure for membrane expansion. This chain is Autophagy-related protein 2 (SPO72), found in Candida albicans (strain SC5314 / ATCC MYA-2876) (Yeast).